Consider the following 274-residue polypeptide: Syntaxin-12 (274 aa).

A disordered region spans residues 1-20; the sequence is MSYGPLDMYRNPGPSGPQPR. N-acetylserine is present on Ser-2. Over 2–250 the chain is Cytoplasmic; sequence SYGPLDMYRN…AYYQKKSRKK (249 aa). Positions 34–80 form a coiled coil; that stretch reads QRISQATAQIKNLMSQLGTKQDSSKLQENLQQFQHSTNQLAKETNEL. The tract at residues 128 to 150 is disordered; the sequence is EKESIARARAGSRLSAEDRQREE. Residues Ser-139, Ser-142, Ser-218, and Ser-225 each carry the phosphoserine modification. The t-SNARE coiled-coil homology domain maps to 178-240; that stretch reads LELIKERETA…ERASDQLQRA (63 aa). The chain crosses the membrane as a helical; Anchor for type IV membrane protein span at residues 251 to 271; it reads MCILVLVLSVIVTVLVVVIWV. The Vesicular portion of the chain corresponds to 272–274; sequence ASK.

This sequence belongs to the syntaxin family. Associates with the BLOC-1 complex. Interacts with BLOC1S6. Interacts with NAPA and SNAP23. Identified in a complex containing STX6, STX12, VAMP4 and VTI1A. Interacts with GRIPAP1. Forms a complex with GRIP1, GRIA2 and NSG1; controls the intracellular fate of AMPAR and the endosomal sorting of the GRIA2 subunit toward recycling and membrane targeting. Interacts with NSG1. Interacts with TPC1. Interacts (via N-terminus) with VPS13B. Ubiquitous. Highly expressed in brain.

The protein localises to the endosome membrane. It is found in the golgi apparatus membrane. The protein resides in the endomembrane system. Its subcellular location is the early endosome membrane. It localises to the recycling endosome membrane. Functionally, SNARE promoting fusion of transport vesicles with target membranes. Together with SNARE STX6, promotes movement of vesicles from endosomes to the cell membrane, and may therefore function in the endocytic recycling pathway. Through complex formation with GRIP1, GRIA2 and NSG1 controls the intracellular fate of AMPAR and the endosomal sorting of the GRIA2 subunit toward recycling and membrane targeting. This is Syntaxin-12 (Stx12) from Rattus norvegicus (Rat).